A 481-amino-acid chain; its full sequence is Glutamate--glyoxylate aminotransferase 2 (481 aa).

Lys-291 is subject to N6-(pyridoxal phosphate)lysine. A Peroxisomal targeting signal motif is present at residues 479–481; it reads SRM.

This sequence belongs to the class-I pyridoxal-phosphate-dependent aminotransferase family. Alanine aminotransferase subfamily. Homodimer. The cofactor is pyridoxal 5'-phosphate. Post-translationally, the N-terminus is blocked. In terms of tissue distribution, expressed at low levels in seedlings, leaves, flowers, roots, and green siliques.

The protein resides in the peroxisome. The catalysed reaction is L-alanine + 2-oxoglutarate = pyruvate + L-glutamate. The enzyme catalyses glyoxylate + L-alanine = glycine + pyruvate. It carries out the reaction glycine + 2-oxoglutarate = glyoxylate + L-glutamate. Its pathway is photosynthesis; C4 acid pathway. It participates in amino-acid degradation; L-alanine degradation via transaminase pathway; pyruvate from L-alanine: step 1/1. Functionally, catalyzes the Glu:glyoxylate aminotransferase (GGT), Ala:glyoxylate aminotransferase (AGT), Ala:2-oxoglutarate aminotransferase (AKT) and Glu:pyruvate aminotransferase (GPT) reactions in peroxisomes. This chain is Glutamate--glyoxylate aminotransferase 2 (GGAT2), found in Arabidopsis thaliana (Mouse-ear cress).